Here is a 221-residue protein sequence, read N- to C-terminus: Spore wall protein 3 (221 aa).

Positions 1-20 are cleaved as a signal peptide; it reads MVRRSLYFLAVMGVVRSSSG. Residues 150 to 203 are disordered; the sequence is ENPASTGSSSTSTCPPKGTAGTTDNKGKAGGAAADDKSKSSSSSSSKKKKKGAK. The segment covering 154 to 173 has biased composition (low complexity); that stretch reads STGSSSTSTCPPKGTAGTTD. Ser-192 carries GPI-anchor amidated serine lipidation. The propeptide at 193–221 is removed in mature form; that stretch reads SSSKKKKKGAKSLVALGAVATTALFSIVM.

It localises to the spore wall. It is found in the membrane. The protein localises to the cytoplasm. In terms of biological role, spore wall component. The sequence is that of Spore wall protein 3 (SWP3) from Encephalitozoon cuniculi (strain GB-M1) (Microsporidian parasite).